Here is a 526-residue protein sequence, read N- to C-terminus: Fusicoccadiene 8-ol C-16-hydroxylase (526 aa).

The chain crosses the membrane as a helical span at residues 34-56; sequence AFVGFSVLGLTLLFSKLFYNAYL. Asn309, Asn418, and Asn434 each carry an N-linked (GlcNAc...) asparagine glycan. Cys470 provides a ligand contact to heme.

It belongs to the cytochrome P450 family. Heme is required as a cofactor.

The protein resides in the membrane. It functions in the pathway mycotoxin biosynthesis. In terms of biological role, cytochrome P450 monooxygenase; part of the 2 gene clusters that mediate the biosynthesis of fusicoccins, diterpene glucosides that display phytohormone-like activity and function as potent activators of plasma membrane H(+)-ATPases in plants by modifying 14-3-3 proteins and cause the plant disease constriction canker. The first step in the pathway is performed by the fusicoccadiene synthase PaFS that possesses both prenyl transferase and terpene cyclase activity, converting isopentenyl diphosphate and dimethylallyl diphosphate into geranylgeranyl diphosphate (GGDP) and successively converting GGDP into fusicocca-2,10(14)-diene, a precursor for fusicoccin H. The second step is the oxidation at the C-8 position by the cytochrome P450 monooxygenase PaP450-2 to yield fusicocca-2,10(14)-diene-8-beta-ol. The cytochrome P450 monooxygenase PaP450-1 then catalyzes the hydroxylation at the C-16 position to produce fusicocca-2,10(14)-diene-8-beta,16-diol. The dioxygenase fc-dox then catalyzes the 16-oxydation of fusicocca-2,10(14)-diene-8-beta,16-diol to yield an aldehyde (8-beta-hydroxyfusicocca-1,10(14)-dien-16-al). The short-chain dehydrogenase/reductase fc-sdr catalyzes the reduction of the aldehyde to yield fusicocca-1,10(14)-diene-8-beta,16-diol. The next step is the hydroxylation at C-9 performed by the cytochrome P450 monooxygenase PaP450-3 that leads to fusicoccin H aglycon which is glycosylated to fusicoccin H by the O-glycosyltransferase PaGT. Hydroxylation at C-12 by the cytochrome P450 monooxygenase PaP450-4 leads then to the production of fusicoccin Q and is followed by methylation by the O-methyltransferase PaMT to yield fusicoccin P. Fusicoccin P is further converted to fusicoccin J via prenylation by the O-glucose prenyltransferase PaPT. Cytochrome P450 monooxygenase PaP450-5 then performs hydroxylation at C-19 to yield dideacetyl-fusicoccin A which is acetylated to 3'-O-deacetyl-fusicoccin A by the O-acetyltransferase PaAT-2. Finally, a another acetylation by the O-acetyltransferase PaAT-1 yields fusicoccin A. This Phomopsis amygdali (Fusicoccum amygdali) protein is Fusicoccadiene 8-ol C-16-hydroxylase.